An 868-amino-acid chain; its full sequence is Translation initiation factor IF-2 (868 aa).

Disordered stretches follow at residues 49–72 (LSKQ…TSTL) and 92–276 (KRSD…EHLK). Positions 92 to 240 (KRSDIEEQQR…KKAEAEEVHL (149 aa)) are enriched in basic and acidic residues. The tr-type G domain occupies 368-537 (SRAPVVTIMG…VLQSELLDLQ (170 aa)). Residues 377–384 (GHVDHGKT) are G1. A GTP-binding site is contributed by 377-384 (GHVDHGKT). The G2 stretch occupies residues 402–406 (GITQH). The segment at 423-426 (DTPG) is G3. Residues 423–427 (DTPGH) and 477–480 (NKMD) contribute to the GTP site. The G4 stretch occupies residues 477-480 (NKMD). A G5 region spans residues 513-515 (SAK).

The protein belongs to the TRAFAC class translation factor GTPase superfamily. Classic translation factor GTPase family. IF-2 subfamily.

It is found in the cytoplasm. Functionally, one of the essential components for the initiation of protein synthesis. Protects formylmethionyl-tRNA from spontaneous hydrolysis and promotes its binding to the 30S ribosomal subunits. Also involved in the hydrolysis of GTP during the formation of the 70S ribosomal complex. The protein is Translation initiation factor IF-2 of Alteromonas mediterranea (strain DSM 17117 / CIP 110805 / LMG 28347 / Deep ecotype).